We begin with the raw amino-acid sequence, 798 residues long: Penicillin-binding protein 1A (798 aa).

The Cytoplasmic portion of the chain corresponds to 1 to 9 (MIKKIITTC). The helical; Signal-anchor for type II membrane protein transmembrane segment at 10–30 (MGLNNGLALFGVGLIAIAILV) threads the bilayer. At 31-798 (TYPKLPSLDS…NNRQQLDSLF (768 aa)) the chain is on the periplasmic side. The tract at residues 50-218 (LTIYSSDGQV…SAYNPIVNPE (169 aa)) is transglycosylase. Glutamate 88 functions as the Proton donor; for transglycosylase activity in the catalytic mechanism. The transpeptidase stretch occupies residues 413 to 699 (TVVQEPLLQG…GTIAVPVWVE (287 aa)). Catalysis depends on serine 460, which acts as the Acyl-ester intermediate; for transpeptidase activity. The disordered stretch occupies residues 734–798 (TSSDLALDNS…NNRQQLDSLF (65 aa)). Positions 782–798 (LPSNTGNNNRQQLDSLF) are enriched in polar residues.

In the N-terminal section; belongs to the glycosyltransferase 51 family. The protein in the C-terminal section; belongs to the transpeptidase family.

It localises to the cell inner membrane. The enzyme catalyses [GlcNAc-(1-&gt;4)-Mur2Ac(oyl-L-Ala-gamma-D-Glu-L-Lys-D-Ala-D-Ala)](n)-di-trans,octa-cis-undecaprenyl diphosphate + beta-D-GlcNAc-(1-&gt;4)-Mur2Ac(oyl-L-Ala-gamma-D-Glu-L-Lys-D-Ala-D-Ala)-di-trans,octa-cis-undecaprenyl diphosphate = [GlcNAc-(1-&gt;4)-Mur2Ac(oyl-L-Ala-gamma-D-Glu-L-Lys-D-Ala-D-Ala)](n+1)-di-trans,octa-cis-undecaprenyl diphosphate + di-trans,octa-cis-undecaprenyl diphosphate + H(+). It carries out the reaction Preferential cleavage: (Ac)2-L-Lys-D-Ala-|-D-Ala. Also transpeptidation of peptidyl-alanyl moieties that are N-acyl substituents of D-alanine.. It participates in cell wall biogenesis; peptidoglycan biosynthesis. Its function is as follows. Cell wall formation. Synthesis of cross-linked peptidoglycan from the lipid intermediates. The enzyme has a penicillin-insensitive transglycosylase N-terminal domain (formation of linear glycan strands) and a penicillin-sensitive transpeptidase C-terminal domain (cross-linking of the peptide subunits). The polypeptide is Penicillin-binding protein 1A (mrcA) (Neisseria flavescens).